The primary structure comprises 142 residues: Hemoglobin subunit alpha-A (142 aa).

In terms of domain architecture, Globin spans 2–142; that stretch reads VLSAADKNNV…VGTVLTAKYR (141 aa). Histidine 59 serves as a coordination point for O2. Histidine 88 is a binding site for heme b.

It belongs to the globin family. As to quaternary structure, heterotetramer of two alpha chains and two beta chains. Red blood cells.

Involved in oxygen transport from the lung to the various peripheral tissues. The chain is Hemoglobin subunit alpha-A (HBAA) from Meleagris gallopavo (Wild turkey).